A 173-amino-acid chain; its full sequence is Alpha-crystallin A chain (173 aa).

Met1 carries the N-acetylmethionine modification. The required for complex formation with BFSP1 and BFSP2 stretch occupies residues 1–63 (MDVTIQHPWF…RTVLDSGVSE (63 aa)). Gln6 carries the deamidated glutamine; partial modification. Ser45 is subject to Phosphoserine. Gln50 carries the deamidated glutamine; partial modification. In terms of domain architecture, sHSP spans 52–162 (LFRTVLDSGV…GHSERAIPVS (111 aa)). At Lys70 the chain carries N6-acetyllysine. Residue Gln90 is modified to Deamidated glutamine; partial. An N6-acetyllysine modification is found at Lys99. Zn(2+) is bound at residue His100. Asn101 carries the post-translational modification Deamidated asparagine; partial. Glu102 and His107 together coordinate Zn(2+). Ser122 carries the phosphoserine modification. Deamidated asparagine; partial is present on Asn123. Positions 145–173 (KVQSGLDAGHSERAIPVSREEKPSSAPSS) are disordered. Gln147 is subject to Deamidated glutamine; partial. Residues 153 to 167 (GHSERAIPVSREEKP) show a composition bias toward basic and acidic residues. A Zn(2+)-binding site is contributed by His154. O-linked (GlcNAc) serine glycosylation occurs at Ser162.

This sequence belongs to the small heat shock protein (HSP20) family. As to quaternary structure, heteromer composed of three CRYAA and one CRYAB subunits. Inter-subunit bridging via zinc ions enhances stability, which is crucial as there is no protein turn over in the lens. Can also form homodimers and homotetramers (dimers of dimers) which serve as the building blocks of homooligomers. Within homooligomers, the zinc-binding motif is created from residues of 3 different molecules. His-100 and Glu-102 from one molecule are ligands of the zinc ion, and His-107 and His-154 residues from additional molecules complete the site with tetrahedral coordination geometry. Part of a complex required for lens intermediate filament formation composed of BFSP1, BFSP2 and CRYAA. Acetylation at Lys-70 may increase chaperone activity. Post-translationally, undergoes age-dependent proteolytical cleavage at the C-terminus.

The protein localises to the cytoplasm. It is found in the nucleus. Contributes to the transparency and refractive index of the lens. Acts as a chaperone, preventing aggregation of various proteins under a wide range of stress conditions. Required for the correct formation of lens intermediate filaments as part of a complex composed of BFSP1, BFSP2 and CRYAA. The protein is Alpha-crystallin A chain (CRYAA) of Eulemur fulvus fulvus (Brown lemur).